We begin with the raw amino-acid sequence, 511 residues long: Cytochrome P450 monooxygenase nodR (511 aa).

Residues 8–28 traverse the membrane as a helical segment; it reads ILFPISWEQSPIFLAVGLIFA. 2 N-linked (GlcNAc...) asparagine glycosylation sites follow: N76 and N373. Residue C452 participates in heme binding.

This sequence belongs to the cytochrome P450 family. Requires heme as cofactor.

It is found in the membrane. The protein operates within secondary metabolite biosynthesis. In terms of biological role, cytochrome P450 monooxygenase; part of the gene cluster that mediates the biosynthesis of the indole diterpenes nodulisporic acids (NA). Nodulisporic acid A (NAA) and its chemically modified derivatives are of particular significance because of their highly potent insecticidal activity against blood-feeding arthropods and lack of observable adverse effects on mammals, in particular the tremogenicity associated with the paspaline-derived IDTs is not observed. The geranylgeranyl diphosphate (GGPP) synthase ggs1, localized outside of the cluster, is proposed to catalyze the first step in nodulisporic acid biosynthesis via conversion of farnesyl pyrophosphate and isopentyl pyrophosphate into geranylgeranyl pyrophosphate (GGPP). Condensation of indole-3-glycerol phosphate with GGPP by the prenyl transferase nodC then forms 3-geranylgeranylindole (3-GGI). Epoxidation by the FAD-dependent monooxygenase nodM leads to a single-epoxidized-GGI that is substrate of the terpene cyclase nodB for cyclization to yield emindole SB. The terminal methyl carbon, C28, of emindole SB is then oxidized by the cytochrome P450 monooxygenase nodW to produce nodulisporic acid F (NAF), the pentacyclic core of NAA. NAF is converted to nodulisporic acid E (NAE) via prenylation. This step is probably performed by one of the indole diterpene prenyltransferases nodD1 or nodD2. Several oxidation steps performed by the FAD-linked oxidoreductase nodO and one of the cytochrome P450 monooxygenase nodR, nodX or nodZ further convert NAE to nodulisporic acid D (NAD). NAD is substrate of cytochrome P450 monooxygenase nodJ to produce the precursor of nodulisporic acid C (NAC), converted to NAC by one of the indole diterpene prenyltransferases nodD1 or nodD2. The FAD-dependent monooxygenase nodY2 then oxidizes NAC to nodulisporic acid B (NAB). Finally NAB is converted to NAA by one of the cytochrome P450 monooxygenases nodR, nodX or nodZ. The protein is Cytochrome P450 monooxygenase nodR of Hypoxylon pulicicidum.